Reading from the N-terminus, the 232-residue chain is 7-cyano-7-deazaguanine synthase (232 aa).

13-23 contacts ATP; that stretch reads LSGGLDSATVL. Zn(2+)-binding residues include Cys-194, Cys-204, Cys-207, and Cys-210.

This sequence belongs to the QueC family. Zn(2+) is required as a cofactor.

It catalyses the reaction 7-carboxy-7-deazaguanine + NH4(+) + ATP = 7-cyano-7-deazaguanine + ADP + phosphate + H2O + H(+). Its pathway is purine metabolism; 7-cyano-7-deazaguanine biosynthesis. Catalyzes the ATP-dependent conversion of 7-carboxy-7-deazaguanine (CDG) to 7-cyano-7-deazaguanine (preQ(0)). The protein is 7-cyano-7-deazaguanine synthase of Hydrogenovibrio crunogenus (strain DSM 25203 / XCL-2) (Thiomicrospira crunogena).